Reading from the N-terminus, the 456-residue chain is Arginine biosynthesis bifunctional protein ArgJ, mitochondrial (456 aa).

The substrate site is built by Thr184, Lys213, Thr224, Glu311, Asn451, and Thr456. Thr224 serves as the catalytic Nucleophile.

It belongs to the ArgJ family. Heterodimer of an alpha and a beta chain. In terms of processing, the alpha and beta chains are autoproteolytically processed from a single precursor protein within the mitochondrion.

It is found in the mitochondrion matrix. It carries out the reaction N(2)-acetyl-L-ornithine + L-glutamate = N-acetyl-L-glutamate + L-ornithine. The enzyme catalyses L-glutamate + acetyl-CoA = N-acetyl-L-glutamate + CoA + H(+). It participates in amino-acid biosynthesis; L-arginine biosynthesis; L-ornithine and N-acetyl-L-glutamate from L-glutamate and N(2)-acetyl-L-ornithine (cyclic): step 1/1. Its pathway is amino-acid biosynthesis; L-arginine biosynthesis; N(2)-acetyl-L-ornithine from L-glutamate: step 1/4. Catalyzes two activities which are involved in the cyclic version of arginine biosynthesis: the synthesis of acetylglutamate from glutamate and acetyl-CoA, and of ornithine by transacetylation between acetylornithine and glutamate. The polypeptide is Arginine biosynthesis bifunctional protein ArgJ, mitochondrial (Aspergillus oryzae (strain ATCC 42149 / RIB 40) (Yellow koji mold)).